Here is a 790-residue protein sequence, read N- to C-terminus: F-box and leucine-rich repeat protein 13 (790 aa).

One can recognise an F-box domain in the interval 237–283 (AFDISVLPEQAILQIFLYLTFKDMMACSRVNRSWMAMIQRGSLWNSI). 6 LRR repeats span residues 503 to 525 (QLTV…HFFD), 531 to 552 (RLRE…IRLS), 557 to 579 (NLHY…YIAS), 582 to 602 (SLIS…TILS), 606 to 628 (KLRE…AYCK), and 632 to 657 (LLEH…IFCT).

The protein belongs to the DRC6 family. As to quaternary structure, component of the nexin-dynein regulatory complex (N-DRC). Directly interacts with SKP1 and CUL1. Interacts with TCTE1/DRC5.

Its subcellular location is the cytoplasm. It is found in the cytoskeleton. It localises to the flagellum axoneme. The protein resides in the microtubule organizing center. The protein localises to the centrosome. Substrate-recognition component of the SCF (SKP1-CUL1-F-box protein)-type E3 ubiquitin ligase complex. Component of the nexin-dynein regulatory complex (N-DRC), a key regulator of ciliary/flagellar motility which maintains the alignment and integrity of the distal axoneme and regulates microtubule sliding in motile axonemes. Specifically targets CEP192 isoform 3 for ubiquitin-mediated proteolysis and thereby acts as a regulator of microtubule nucleation activity. The polypeptide is F-box and leucine-rich repeat protein 13 (Fbxl13) (Mus musculus (Mouse)).